A 539-amino-acid chain; its full sequence is Putative cysteine ligase BshC (539 aa).

A coiled-coil region spans residues 455–475 (LQKNAAFIQDQLLFLERTVTK).

The protein belongs to the BshC family.

Involved in bacillithiol (BSH) biosynthesis. May catalyze the last step of the pathway, the addition of cysteine to glucosamine malate (GlcN-Mal) to generate BSH. In Bacillus velezensis (strain DSM 23117 / BGSC 10A6 / LMG 26770 / FZB42) (Bacillus amyloliquefaciens subsp. plantarum), this protein is Putative cysteine ligase BshC.